The primary structure comprises 429 residues: 26S proteasome regulatory subunit RPN7 (429 aa).

Serine 8 and serine 77 each carry phosphoserine. One copy of the TPR repeat lies at 131 to 164; that stretch reads AQAWINLGEYYAQIGDKDNAEKTLGKSLSKAIST. Residues 223-395 enclose the PCI domain; the sequence is NFKEAAKLLV…GIVETNRPDN (173 aa).

In terms of assembly, the 26S proteasome is composed of a core protease, known as the 20S proteasome, capped at one or both ends by the 19S regulatory complex (RC). The RC is composed of at least 18 different subunits in two subcomplexes, the base and the lid, which form the portions proximal and distal to the 20S proteolytic core, respectively. Component of the lid subcomplex of the 19S RC.

The protein resides in the nucleus. Component of the 19S cap proteasome complex which acts as a regulatory subunit of the 26S proteasome, involved in the ATP-dependent degradation of ubiquitinated proteins. The sequence is that of 26S proteasome regulatory subunit RPN7 from Saccharomyces cerevisiae (strain ATCC 204508 / S288c) (Baker's yeast).